We begin with the raw amino-acid sequence, 447 residues long: N-succinylarginine dihydrolase (447 aa).

Substrate is bound by residues 19–28 (AGLSFGNEAS), asparagine 110, and 137–138 (HR). Residue glutamate 174 is part of the active site. Residue arginine 212 participates in substrate binding. Histidine 248 is a catalytic residue. Substrate contacts are provided by aspartate 250 and asparagine 359. The active-site Nucleophile is cysteine 365.

This sequence belongs to the succinylarginine dihydrolase family. As to quaternary structure, homodimer.

It catalyses the reaction N(2)-succinyl-L-arginine + 2 H2O + 2 H(+) = N(2)-succinyl-L-ornithine + 2 NH4(+) + CO2. It participates in amino-acid degradation; L-arginine degradation via AST pathway; L-glutamate and succinate from L-arginine: step 2/5. Its function is as follows. Catalyzes the hydrolysis of N(2)-succinylarginine into N(2)-succinylornithine, ammonia and CO(2). The polypeptide is N-succinylarginine dihydrolase (Escherichia coli O6:H1 (strain CFT073 / ATCC 700928 / UPEC)).